The sequence spans 148 residues: Transcriptional regulator MraZ (148 aa).

SpoVT-AbrB domains lie at 5-53 (ETAI…AEKE) and 82-125 (SAVL…SEQA).

This sequence belongs to the MraZ family. Forms oligomers.

The protein resides in the cytoplasm. Its subcellular location is the nucleoid. The chain is Transcriptional regulator MraZ from Xanthomonas oryzae pv. oryzae (strain MAFF 311018).